The following is a 343-amino-acid chain: Glyceraldehyde-3-phosphate dehydrogenase (343 aa).

NAD(+)-binding positions include 13–14 (TI) and Gly111. 140-142 (SCN) contributes to the D-glyceraldehyde 3-phosphate binding site. Cys141 functions as the Nucleophile in the catalytic mechanism. Arg169 provides a ligand contact to NAD(+). 195–196 (HA) provides a ligand contact to D-glyceraldehyde 3-phosphate. NAD(+) is bound at residue Gln303.

The protein belongs to the glyceraldehyde-3-phosphate dehydrogenase family. Homotetramer.

It localises to the cytoplasm. It catalyses the reaction D-glyceraldehyde 3-phosphate + phosphate + NADP(+) = (2R)-3-phospho-glyceroyl phosphate + NADPH + H(+). The catalysed reaction is D-glyceraldehyde 3-phosphate + phosphate + NAD(+) = (2R)-3-phospho-glyceroyl phosphate + NADH + H(+). The protein operates within carbohydrate degradation; glycolysis; pyruvate from D-glyceraldehyde 3-phosphate: step 1/5. The sequence is that of Glyceraldehyde-3-phosphate dehydrogenase from Sulfolobus acidocaldarius (strain ATCC 33909 / DSM 639 / JCM 8929 / NBRC 15157 / NCIMB 11770).